The following is a 91-amino-acid chain: DNA-binding protein HRL18 (91 aa).

This sequence belongs to the bacterial histone-like protein family.

Histone-like DNA-binding protein which is capable of wrapping DNA to stabilize it, and thus to prevent its denaturation under extreme environmental conditions. This Rhizobium leguminosarum protein is DNA-binding protein HRL18.